A 78-amino-acid polypeptide reads, in one-letter code: Beta-defensin 105A (78 aa).

A signal peptide spans 1 to 27 (MALIKKTFFFLFAMFFILVQLSSGCQA). 3 disulfides stabilise this stretch: cysteine 43-cysteine 74, cysteine 53-cysteine 67, and cysteine 57-cysteine 73.

This sequence belongs to the beta-defensin family.

The protein resides in the secreted. Functionally, has antimicrobial activity. This is Beta-defensin 105A (DEFB105A) from Pan troglodytes (Chimpanzee).